The chain runs to 351 residues: uncharacterized protein (351 aa).

The Mn(2+) site is built by aspartate 215, aspartate 226, histidine 290, glutamate 319, and glutamate 333.

Belongs to the peptidase M24B family. Mn(2+) is required as a cofactor.

This is an uncharacterized protein from Staphylococcus epidermidis (strain ATCC 35984 / DSM 28319 / BCRC 17069 / CCUG 31568 / BM 3577 / RP62A).